The sequence spans 202 residues: MYIGRFLVVGKTKEGKPFAAYRVSSRSFPNREAKKMDDNTVAIIPKDLNEMFKNPYITYNCIKVIDKTIVVSNGTHTDFIAEKLHFGKRDALAYVLAVMDYEKDDYKTPRIAAILDENECYMGYVAHDDIRVKKVELKDGKGYYLGVYNACKIDENQIIDIKGETAEEIADYILNYEEFEHPVACAVAVIDKDGIKIATKGK.

It belongs to the archaeal IMP cyclohydrolase family.

It carries out the reaction IMP + H2O = 5-formamido-1-(5-phospho-D-ribosyl)imidazole-4-carboxamide. The protein operates within purine metabolism; IMP biosynthesis via de novo pathway; IMP from 5-formamido-1-(5-phospho-D-ribosyl)imidazole-4-carboxamide: step 1/1. Functionally, catalyzes the cyclization of 5-formylamidoimidazole-4-carboxamide ribonucleotide to IMP. This is IMP cyclohydrolase (purO) from Methanocaldococcus jannaschii (strain ATCC 43067 / DSM 2661 / JAL-1 / JCM 10045 / NBRC 100440) (Methanococcus jannaschii).